The following is a 137-amino-acid chain: MAKKTITRIAKINLLGGQAKPGPALASVGINMGEFTKQFNEKTKDKQGEMIPCVITAYNDKSFDFILKTTPVSILLKQAAKLEKGAKNAKTIVGKITMAKAKEIAQYKLVDLNANTVEAALKMVLGTAKQMGIEVIE.

Belongs to the universal ribosomal protein uL11 family. Part of the ribosomal stalk of the 50S ribosomal subunit. Interacts with L10 and the large rRNA to form the base of the stalk. L10 forms an elongated spine to which L12 dimers bind in a sequential fashion forming a multimeric L10(L12)X complex. One or more lysine residues are methylated.

In terms of biological role, forms part of the ribosomal stalk which helps the ribosome interact with GTP-bound translation factors. The polypeptide is Large ribosomal subunit protein uL11 (Mycoplasma pneumoniae (strain ATCC 29342 / M129 / Subtype 1) (Mycoplasmoides pneumoniae)).